The chain runs to 379 residues: MKLYEYEGKEIARKYGIETPRGILATSVEDVDKAYRELNTGTVVLKSQVLVGGRGLAGGVKKASNLEEALTKARELFSMSIKGERVEKILVEEAVCISRELYMSLTVDRATRKLVYLASGMGGVEIEELARKHPDKILRIPVDPFIGYSGYMARHALGFLGLQWDKLGQLDNIMRAMYKIMIDYDAELVEFNPLAYTCDGRLTALDAKIIIDDNSLYRHPDLQPLYGRDATPYEKVAKQLDFNYVELDGDIGVISNGAGLTMATMDSILHYGGRPANFLDIGGGATRERVREAVKIVVTHPRVKAVLVNIFGGITRCDEVASGIVEALSETKVAKPIVVRMLGTNEEEGRRILIEHGITVYTEMDEAVLRIIQLVRGVG.

Residues 9–236 form the ATP-grasp domain; the sequence is KEIARKYGIE…GRDATPYEKV (228 aa). ATP is bound by residues lysine 46, 53 to 55, glutamate 92, valine 95, and glutamate 100; that span reads GRG. Residues asparagine 192 and aspartate 206 each contribute to the Mg(2+) site. Substrate contacts are provided by residues asparagine 256 and 313–315; that span reads GIT.

The protein belongs to the succinate/malate CoA ligase beta subunit family. As to quaternary structure, heterotetramer of two alpha and two beta subunits. Mg(2+) is required as a cofactor.

The catalysed reaction is succinate + ATP + CoA = succinyl-CoA + ADP + phosphate. It carries out the reaction GTP + succinate + CoA = succinyl-CoA + GDP + phosphate. It participates in carbohydrate metabolism; tricarboxylic acid cycle; succinate from succinyl-CoA (ligase route): step 1/1. Succinyl-CoA synthetase functions in the citric acid cycle (TCA), coupling the hydrolysis of succinyl-CoA to the synthesis of either ATP or GTP and thus represents the only step of substrate-level phosphorylation in the TCA. The beta subunit provides nucleotide specificity of the enzyme and binds the substrate succinate, while the binding sites for coenzyme A and phosphate are found in the alpha subunit. The sequence is that of Succinate--CoA ligase [ADP-forming] subunit beta from Desulfurococcus amylolyticus (strain DSM 18924 / JCM 16383 / VKM B-2413 / 1221n) (Desulfurococcus kamchatkensis).